A 66-amino-acid chain; its full sequence is Large ribosomal subunit protein bL33c (66 aa).

Belongs to the bacterial ribosomal protein bL33 family.

It is found in the plastid. This is Large ribosomal subunit protein bL33c from Cuscuta gronovii (Common dodder).